The primary structure comprises 357 residues: SNF1-related protein kinase regulatory subunit gamma-like PV42b (357 aa).

CBS domains are found at residues 16-97 (MIDK…DGES), 113-185 (HCPE…SSQL), 198-273 (AIHN…WLPL), and 293-351 (STPG…ALLS).

The protein belongs to the 5'-AMP-activated protein kinase gamma subunit family. In terms of tissue distribution, expressed highly in rosette leaves, cauline leaves, open flowers, developing siliques and dry seeds, but at a low level in stems and floral buds.

Functionally, plays redundant role with PV42a in regulating male gametogenesis and pollen tube guidance. The protein is SNF1-related protein kinase regulatory subunit gamma-like PV42b (PV42B) of Arabidopsis thaliana (Mouse-ear cress).